A 216-amino-acid polypeptide reads, in one-letter code: PEP-dependent dihydroxyacetone kinase 2, ADP-binding subunit DhaL (216 aa).

In terms of domain architecture, DhaL spans 9–210 (AFFGHVLQDM…SWMLMNVILE (202 aa)). Mg(2+) contacts are provided by Asp-33, Asp-38, and Asp-40. ADP is bound by residues 41-44 (HGIN), 84-85 (AS), Gly-126, Met-135, Arg-182, and 195-197 (DPG).

As to quaternary structure, homodimer. The dihydroxyacetone kinase complex is composed of a homodimer of DhaM, a homodimer of DhaK and the subunit DhaL. Mg(2+) serves as cofactor.

Its subcellular location is the cytoplasm. The catalysed reaction is dihydroxyacetone + phosphoenolpyruvate = dihydroxyacetone phosphate + pyruvate. It participates in polyol metabolism; glycerol degradation. In terms of biological role, ADP-binding subunit of the dihydroxyacetone kinase, which is responsible for the phosphoenolpyruvate (PEP)-dependent phosphorylation of dihydroxyacetone. DhaL-ADP is converted to DhaL-ATP via a phosphoryl group transfer from DhaM and transmits it to dihydroxyacetone binds to DhaK. The polypeptide is PEP-dependent dihydroxyacetone kinase 2, ADP-binding subunit DhaL (Listeria innocua serovar 6a (strain ATCC BAA-680 / CLIP 11262)).